Consider the following 627-residue polypeptide: Coiled-coil domain-containing protein 22 (627 aa).

Residues 1-321 (MEEADRILIH…VSDVPATSRR (321 aa)) are sufficient for interaction with COMMD1. The segment at 1–447 (MEEADRILIH…LQDCRELESS (447 aa)) is sufficicient and required for interaction with CCDC93. A disordered region spans residues 218–243 (TGRDRPGDEDWVHRTSRLPPQEDTRA). Positions 219–230 (GRDRPGDEDWVH) are enriched in basic and acidic residues. Residues 320-627 (RRPEQVTWAA…AGLLGRVREA (308 aa)) are a coiled coil. A Phosphoserine modification is found at serine 410.

Belongs to the CCDC22 family. In terms of assembly, component of the commander complex consisting of the CCC subcomplex and the retriever subcomplex. Component of the CCC (COMMD/CCDC22/CCDC93) subcomplex consisting of COMMD1, COMMD2, COMMD3, COMMD4, COMMD5, COMMD6, COMMD7, COMMD8, COMMD9, COMMD10, CCDC22 and CCDC93. Forms a coiled-coil heterodimer with CCDC22; this heterodimer interacts with the guanine nucleotide exchange factor DENND10; the interaction is direct. Interacts with CUL1, CUL2, CUL3, SKP1, BTRC. Interacts with SNX17 and SNX31. Interacts with CPNE1 and CPNE4. In terms of tissue distribution, widely expressed in adult tissues and in fetal liver and brain, with highest levels in prostate and lowest in skeletal muscle.

It is found in the endosome. The protein localises to the cytoplasm. Its subcellular location is the cytoskeleton. The protein resides in the microtubule organizing center. It localises to the centrosome. Functionally, component of the commander complex that is essential for endosomal recycling of transmembrane cargos; the Commander complex is composed of composed of the CCC subcomplex and the retriever subcomplex. Component of the CCC complex, which is involved in the regulation of endosomal recycling of surface proteins, including integrins, signaling receptor and channels. Involved in regulation of NF-kappa-B signaling. Promotes ubiquitination of I-kappa-B-kinase subunit IKBKB and its subsequent proteasomal degradation leading to NF-kappa-B activation; the function may involve association with COMMD8 and a CUL1-dependent E3 ubiquitin ligase complex. May down-regulate NF-kappa-B activity via association with COMMD1 and involving a CUL2-dependent E3 ubiquitin ligase complex. Regulates the cellular localization of COMM domain-containing proteins, such as COMMD1 and COMMD10. Component of the CCC complex, which is involved in the regulation of endosomal recycling of surface proteins, including integrins, signaling receptor and channels. The CCC complex associates with SNX17, retriever and WASH complexes to prevent lysosomal degradation and promote cell surface recycling of numerous cargos such as integrins ITGA5:ITGB1. Plays a role in copper ion homeostasis. Involved in copper-dependent ATP7A trafficking between the trans-Golgi network and vesicles in the cell periphery; the function is proposed to depend on its association within the CCC complex and cooperation with the WASH complex on early endosomes. In terms of biological role, (Microbial infection) The CCC complex, in collaboration with the heterotrimeric retriever complex, mediates the exit of human papillomavirus to the cell surface. The protein is Coiled-coil domain-containing protein 22 (CCDC22) of Homo sapiens (Human).